The chain runs to 1129 residues: SMC5-SMC6 complex localization factor protein 2 (1129 aa).

3 disordered regions span residues 71–178 (VKAR…SILN), 312–343 (NTSS…TEQA), and 955–1057 (MLYD…QLEG). Residues 72-87 (KARRHTLPHSSHRRSP) are compositionally biased toward basic residues. The span at 93-110 (LLFQQRPRNSSGQFTHNP) shows a compositional bias: polar residues. Basic and acidic residues-rich tracts occupy residues 112 to 130 (QKKD…KKEL) and 149 to 166 (RKSE…RPRV). Composition is skewed to polar residues over residues 169-178 (QATSSSSILN) and 324-343 (TGRS…TEQA). Composition is skewed to acidic residues over residues 999-1014 (ESEE…EEDW) and 1033-1048 (SAED…EEES).

The protein belongs to the FAM178 family.

It localises to the nucleus. Functionally, plays a role in the DNA damage response (DDR) pathway by regulating postreplication repair of UV-damaged DNA and genomic stability maintenance. Promotes the recruitment of the SMC5-SMC6 complex to DNA lesions. The chain is SMC5-SMC6 complex localization factor protein 2 (slf2) from Danio rerio (Zebrafish).